A 420-amino-acid polypeptide reads, in one-letter code: Serine hydroxymethyltransferase (420 aa).

(6S)-5,6,7,8-tetrahydrofolate is bound by residues leucine 121 and 125–127; that span reads GHL. The residue at position 229 (lysine 229) is an N6-(pyridoxal phosphate)lysine. 355–357 serves as a coordination point for (6S)-5,6,7,8-tetrahydrofolate; that stretch reads SPF.

It belongs to the SHMT family. As to quaternary structure, homodimer. Pyridoxal 5'-phosphate serves as cofactor.

It localises to the cytoplasm. It carries out the reaction (6R)-5,10-methylene-5,6,7,8-tetrahydrofolate + glycine + H2O = (6S)-5,6,7,8-tetrahydrofolate + L-serine. It functions in the pathway one-carbon metabolism; tetrahydrofolate interconversion. It participates in amino-acid biosynthesis; glycine biosynthesis; glycine from L-serine: step 1/1. Functionally, catalyzes the reversible interconversion of serine and glycine with tetrahydrofolate (THF) serving as the one-carbon carrier. This reaction serves as the major source of one-carbon groups required for the biosynthesis of purines, thymidylate, methionine, and other important biomolecules. Also exhibits THF-independent aldolase activity toward beta-hydroxyamino acids, producing glycine and aldehydes, via a retro-aldol mechanism. The polypeptide is Serine hydroxymethyltransferase (Chromohalobacter salexigens (strain ATCC BAA-138 / DSM 3043 / CIP 106854 / NCIMB 13768 / 1H11)).